The chain runs to 185 residues: UPF0397 protein AYWB_013 (185 aa).

The next 5 helical transmembrane spans lie at 13–33 (IGLSTTIFFVLSCFASIPVGF), 42–62 (AFLAFIAVAFGPSVGFYVGLI), 69–89 (FFLFGNVSWNWVLCSALIGFI), 109–129 (IVYFWLYQVACNFIIWGFFAP), and 148–168 (FLIVISNILAYSVVGIKLMTI).

The protein belongs to the UPF0397 family.

The protein resides in the cell membrane. This Aster yellows witches'-broom phytoplasma (strain AYWB) protein is UPF0397 protein AYWB_013.